The primary structure comprises 315 residues: Homoserine kinase (315 aa).

ATP is bound at residue 91-101 (PIGSGLGSSAS).

Belongs to the GHMP kinase family. Homoserine kinase subfamily.

The protein resides in the cytoplasm. The enzyme catalyses L-homoserine + ATP = O-phospho-L-homoserine + ADP + H(+). It participates in amino-acid biosynthesis; L-threonine biosynthesis; L-threonine from L-aspartate: step 4/5. Catalyzes the ATP-dependent phosphorylation of L-homoserine to L-homoserine phosphate. The chain is Homoserine kinase from Buchnera aphidicola subsp. Cinara cedri (strain Cc).